A 435-amino-acid polypeptide reads, in one-letter code: Arginine/serine-rich coiled-coil protein 2 (435 aa).

Over residues 1-27 the composition is skewed to basic and acidic residues; sequence MAASDTERDGLAPEKTSPDRDKKKEQS. Positions 1–230 are disordered; that stretch reads MAASDTERDG…PSPPPFRGRN (230 aa). Residue alanine 2 is modified to N-acetylalanine. Serine 4 is modified (phosphoserine). A phosphothreonine mark is found at threonine 6 and threonine 16. A phosphoserine mark is found at serine 17, serine 30, and serine 32. Basic residues predominate over residues 35–51; that stretch reads ASKHHYSRSRSRSRERK. Over residues 66–111 the composition is skewed to basic and acidic residues; the sequence is RSKEARRHESKDKSSKKHKSEEHNDKEHSSDKGRERLNSSENGEDR. Phosphoserine is present on serine 104. Residues 112–214 are compositionally biased toward basic residues; the sequence is HKRKERKSSR…KRIEKPRRFS (103 aa). Positions 230-270 form a coiled coil; the sequence is NTAMDAQEALARRLERAKKLQEQREKEMVEKQKQQEIAAAA. A Glycyl lysine isopeptide (Lys-Gly) (interchain with G-Cter in SUMO1); alternate cross-link involves residue lysine 376. Residue lysine 376 forms a Glycyl lysine isopeptide (Lys-Gly) (interchain with G-Cter in SUMO2); alternate linkage. Serine 377 carries the phosphoserine modification.

Belongs to the RSRC2 family.

This Pongo abelii (Sumatran orangutan) protein is Arginine/serine-rich coiled-coil protein 2 (RSRC2).